We begin with the raw amino-acid sequence, 637 residues long: CREB-regulated transcription coactivator 3 (637 aa).

At Ser-66 the chain carries Phosphoserine. The span at Asn-105–Ile-115 shows a compositional bias: basic residues. Disordered regions lie at residues Asn-105 to Asp-184 and His-269 to Ile-288. A Phosphoserine modification is found at Ser-133. The residue at position 143 (Thr-143) is a Phosphothreonine. A Phosphoserine; by SIK2 modification is found at Ser-145. Positions Ser-145–Gln-159 are enriched in polar residues. Residue Thr-151 is modified to Phosphothreonine. At Ser-293 the chain carries Phosphoserine. The segment at Ala-299–Pro-462 is disordered. Positions Pro-309–Thr-337 are enriched in polar residues. The span at Pro-344–Leu-365 shows a compositional bias: low complexity. Phosphoserine occurs at positions 377 and 396. Residues Ser-377 to Phe-395 are compositionally biased toward polar residues. Low complexity predominate over residues Ser-396–Ser-407. The span at Ser-418–Pro-429 shows a compositional bias: pro residues. Over residues Leu-430 to His-447 the composition is skewed to low complexity. Ser-561 carries the post-translational modification Phosphoserine. Residues Met-615 to Leu-637 are disordered.

Belongs to the TORC family. As to quaternary structure, binding, as a tetramer, through its N-terminal region, with the bZIP domain of creb1 enhances recruitment of taf4 to the promoter. 'Arg-300' in the bZIP domain of creb1 is essential for this interaction.

The protein localises to the nucleus. Its subcellular location is the cytoplasm. In terms of biological role, transcriptional coactivator for creb1 which activates transcription through both consensus and variant cAMP response element (CRE) sites. Acts as a coactivator, in the SIK/TORC signaling pathway, being active when dephosphorylated and acts independently of creb1 'Ser-119' phosphorylation. Enhances the interaction of creb1 with taf4. Regulates the expression of specific CREB-activated genes such as the steroidogenic gene, StAR. Potent coactivator of ppargc1a and inducer of mitochondrial biogenesis in muscle cells. In Xenopus tropicalis (Western clawed frog), this protein is CREB-regulated transcription coactivator 3 (crtc3).